A 545-amino-acid chain; its full sequence is DNA mismatch repair protein MutL (545 aa).

A disordered region spans residues 517-545; that stretch reads RRSGARGGGEARPRPQEESFPEAPLPREP.

This sequence belongs to the DNA mismatch repair MutL/HexB family.

In terms of biological role, this protein is involved in the repair of mismatches in DNA. It is required for dam-dependent methyl-directed DNA mismatch repair. May act as a 'molecular matchmaker', a protein that promotes the formation of a stable complex between two or more DNA-binding proteins in an ATP-dependent manner without itself being part of a final effector complex. This chain is DNA mismatch repair protein MutL, found in Thermus thermophilus (strain ATCC 27634 / DSM 579 / HB8).